A 409-amino-acid polypeptide reads, in one-letter code: Epoxyqueuosine reductase (409 aa).

Positions Met1–Ser23 are disordered. The active-site Proton donor is the Asp178. The region spanning Ala232–Arg261 is the 4Fe-4S ferredoxin-type domain. 8 residues coordinate [4Fe-4S] cluster: Cys241, Cys244, Cys247, Cys251, Cys267, Cys294, Cys297, and Cys301.

Belongs to the QueG family. Monomer. Requires cob(II)alamin as cofactor. [4Fe-4S] cluster is required as a cofactor.

It is found in the cytoplasm. It carries out the reaction epoxyqueuosine(34) in tRNA + AH2 = queuosine(34) in tRNA + A + H2O. It participates in tRNA modification; tRNA-queuosine biosynthesis. In terms of biological role, catalyzes the conversion of epoxyqueuosine (oQ) to queuosine (Q), which is a hypermodified base found in the wobble positions of tRNA(Asp), tRNA(Asn), tRNA(His) and tRNA(Tyr). This Burkholderia pseudomallei (strain K96243) protein is Epoxyqueuosine reductase.